A 349-amino-acid chain; its full sequence is Protein-glutamate methylesterase/protein-glutamine glutaminase 1 (349 aa).

The 116-residue stretch at 4–119 folds into the Response regulatory domain; it reads RILVVDDSAV…KGFLEDSARR (116 aa). A 4-aspartylphosphate modification is found at Asp-53. The CheB-type methylesterase domain maps to 159 to 349; the sequence is PRAGRAELVV…VASAVLAWAR (191 aa). Residues Ser-172, His-198, and Asp-293 contribute to the active site.

Belongs to the CheB family. Phosphorylated by CheA. Phosphorylation of the N-terminal regulatory domain activates the methylesterase activity.

Its subcellular location is the cytoplasm. The catalysed reaction is [protein]-L-glutamate 5-O-methyl ester + H2O = L-glutamyl-[protein] + methanol + H(+). It catalyses the reaction L-glutaminyl-[protein] + H2O = L-glutamyl-[protein] + NH4(+). In terms of biological role, involved in chemotaxis. Part of a chemotaxis signal transduction system that modulates chemotaxis in response to various stimuli. Catalyzes the demethylation of specific methylglutamate residues introduced into the chemoreceptors (methyl-accepting chemotaxis proteins or MCP) by CheR. Also mediates the irreversible deamidation of specific glutamine residues to glutamic acid. In Anaeromyxobacter dehalogenans (strain 2CP-C), this protein is Protein-glutamate methylesterase/protein-glutamine glutaminase 1.